Consider the following 623-residue polypeptide: Cell pattern formation-associated protein stuA (623 aa).

Over residues 13–31 (QHMQSAGQPQQPQTVTSGP) the composition is skewed to polar residues. The interval 13–111 (QHMQSAGQPQ…DTTGQHPPPG (99 aa)) is disordered. One can recognise an HTH APSES-type domain in the interval 115–221 (RVTATLWEDE…HNIGALLYHP (107 aa)). Residues 149 to 170 (GTKLLNVAGMTRGRRDGILKSE) constitute a DNA-binding region (H-T-H motif). Disordered regions lie at residues 232 to 270 (AAAE…PQSS) and 332 to 623 (ARSM…PRQR). The segment covering 335–374 (MPTTPATTPPGSMQPYGSAQSFDGSRQQMYNAPSQQSPYP) has biased composition (polar residues). The span at 396-408 (GPPSSRPSGSAPS) shows a compositional bias: low complexity. Residues 423–446 (EHGHQSHAGEEDGEHEQHDAEYTH) are compositionally biased toward basic and acidic residues. The span at 542-553 (APPADMANPMPN) shows a compositional bias: low complexity. The interval 569–594 (KRGREGDDDLSRPVGDVPGMDMKRRK) is nuclear localization domain. The segment covering 570 to 579 (RGREGDDDLS) has biased composition (basic and acidic residues).

This sequence belongs to the EFG1/PHD1/stuA family.

It is found in the nucleus. Functionally, transcription factor that regulates asexual reproduction. Binds the StuA-response elements (StRE) with the consensus sequence 5'-(A/T)CGCG(T/A)N(A/C)-3' at the promoters of target genes. Controls conidiation by positively regulating the expression of brlA and abaA. Positively regulates the cephalosporin biosynthesis gene cluster. Also involved hyphal fragmentation and cell wall integrity. This Hapsidospora chrysogenum (strain ATCC 11550 / CBS 779.69 / DSM 880 / IAM 14645 / JCM 23072 / IMI 49137) (Acremonium chrysogenum) protein is Cell pattern formation-associated protein stuA.